Consider the following 361-residue polypeptide: Ankyrin repeat domain-containing protein 16 (361 aa).

9 ANK repeats span residues 36–66 (AGDT…DIEA), 70–99 (DYKR…AVDC), 103–132 (ADWT…NPLL), 136–165 (DGWN…GAWK), 170–200 (IRRT…EPDY), 204–234 (CGVT…CLSA), 238–268 (LGAQ…DVDV), 273–302 (THLT…DINS), and 306–335 (KNRS…KDSE).

In terms of assembly, interacts with AARS; the interaction is direct.

The protein localises to the cytoplasm. It localises to the nucleus. In terms of biological role, required to prevent the misactivation of serine (Ser) with tRNA(Ala) by promoting the hydrolysis of Ser-mischarged tRNA(Ala), thereby playing a role in translational fidelity. Binds directly to the catalytic domain of AARS/AlaRS and captures Ser that is misactivated by AARS/AlaRS, preventing the charging of Ser adenylates to tRNA(Ala) and precluding Ser misincorporation in nascent peptides. The chain is Ankyrin repeat domain-containing protein 16 from Homo sapiens (Human).